Here is a 205-residue protein sequence, read N- to C-terminus: Ras-related protein rab-6.1 (205 aa).

Residues 18 to 25, T43, 66 to 70, and 124 to 127 each bind GTP; these read GEQSVGKT, DTAGQ, and NKTD. 2 S-geranylgeranyl cysteine lipidation sites follow: C203 and C205. Position 205 is a cysteine methyl ester (C205).

Belongs to the small GTPase superfamily. Rab family. In terms of assembly, interacts with GARP complex component vps-52. Highly expressed in body wall muscle, intestine, somatic gonad, distal tip cells, vulva, and neurons including AVB, AVD, RIG, and PVC (at protein level). Not expressed in AVA and RMDV neurons.

The protein resides in the cell membrane. Its subcellular location is the cell projection. It is found in the dendrite. It localises to the perikaryon. The protein localises to the golgi apparatus. The protein resides in the cytoplasmic vesicle. Its subcellular location is the secretory vesicle. Its function is as follows. The small GTPases Rab are key regulators of intracellular membrane trafficking, from the formation of transport vesicles to their fusion with membranes. Rabs cycle between an inactive GDP-bound form and an active GTP-bound form that is able to recruit to membranes different set of downstream effectors directly responsible for vesicle formation, movement, tethering and fusion. In its active GTP-bound form, acts redundantly with rab-6.2 (in its active GTP-bound form) to positively regulate the retrograde trafficking of cargo molecules from endosomes to Golgi structures. Required for the retrograde trafficking of glr-1, a subunit of AMPA-type glutamate receptors (AMPRs), out of early endosomes and into the Golgi compartment in neurons. Together with rab-6.2, promotes the retrograde trafficking of mig-14 from endosomes to Golgi structures in the intestine. In oocytes, in its active GTP-bound form, involved in the membrane fusion and exocytosis of secretory vesicles (cortical granules) to play a role in the remodeling of the embryo surface following fertilization. Recruits sep-1 to cortical granules (derived from the Golgi complex) for exocytosis during the oocyte-to-embryo transition. Required for seam cell division and alae formation. Promotes spontaneous reversals in locomotion. The sequence is that of Ras-related protein rab-6.1 from Caenorhabditis elegans.